Consider the following 355-residue polypeptide: Probable butyrate kinase (355 aa).

Belongs to the acetokinase family.

Its subcellular location is the cytoplasm. The catalysed reaction is butanoate + ATP = butanoyl phosphate + ADP. In Listeria monocytogenes serotype 4b (strain CLIP80459), this protein is Probable butyrate kinase.